Consider the following 59-residue polypeptide: Large ribosomal subunit protein uL30 (59 aa).

Belongs to the universal ribosomal protein uL30 family. In terms of assembly, part of the 50S ribosomal subunit.

The sequence is that of Large ribosomal subunit protein uL30 from Acetivibrio thermocellus (strain ATCC 27405 / DSM 1237 / JCM 9322 / NBRC 103400 / NCIMB 10682 / NRRL B-4536 / VPI 7372) (Clostridium thermocellum).